Consider the following 323-residue polypeptide: Pantothenate kinase (323 aa).

101-108 (GSVAVGKS) is a binding site for ATP.

This sequence belongs to the prokaryotic pantothenate kinase family.

The protein resides in the cytoplasm. The enzyme catalyses (R)-pantothenate + ATP = (R)-4'-phosphopantothenate + ADP + H(+). The protein operates within cofactor biosynthesis; coenzyme A biosynthesis; CoA from (R)-pantothenate: step 1/5. This is Pantothenate kinase from Xanthobacter autotrophicus (strain ATCC BAA-1158 / Py2).